Consider the following 252-residue polypeptide: Enolase-phosphatase E1 (252 aa).

Mg(2+) is bound by residues D14 and E16. Substrate contacts are provided by residues S142–S143 and K176. D201 contacts Mg(2+).

Belongs to the HAD-like hydrolase superfamily. MasA/MtnC family. In terms of assembly, monomer. Mg(2+) is required as a cofactor.

It is found in the cytoplasm. It localises to the nucleus. It carries out the reaction 5-methylsulfanyl-2,3-dioxopentyl phosphate + H2O = 1,2-dihydroxy-5-(methylsulfanyl)pent-1-en-3-one + phosphate. It participates in amino-acid biosynthesis; L-methionine biosynthesis via salvage pathway; L-methionine from S-methyl-5-thio-alpha-D-ribose 1-phosphate: step 3/6. It functions in the pathway amino-acid biosynthesis; L-methionine biosynthesis via salvage pathway; L-methionine from S-methyl-5-thio-alpha-D-ribose 1-phosphate: step 4/6. Its function is as follows. Bifunctional enzyme that catalyzes the enolization of 2,3-diketo-5-methylthiopentyl-1-phosphate (DK-MTP-1-P) into the intermediate 2-hydroxy-3-keto-5-methylthiopentenyl-1-phosphate (HK-MTPenyl-1-P), which is then dephosphorylated to form the acireductone 1,2-dihydroxy-3-keto-5-methylthiopentene (DHK-MTPene). In Drosophila ananassae (Fruit fly), this protein is Enolase-phosphatase E1.